A 91-amino-acid chain; its full sequence is Small ribosomal subunit protein bS18 (91 aa).

The protein belongs to the bacterial ribosomal protein bS18 family. Part of the 30S ribosomal subunit. Forms a tight heterodimer with protein bS6.

In terms of biological role, binds as a heterodimer with protein bS6 to the central domain of the 16S rRNA, where it helps stabilize the platform of the 30S subunit. This chain is Small ribosomal subunit protein bS18, found in Syntrophotalea carbinolica (strain DSM 2380 / NBRC 103641 / GraBd1) (Pelobacter carbinolicus).